A 311-amino-acid polypeptide reads, in one-letter code: L-lactate dehydrogenase (311 aa).

NAD(+) is bound by residues Val12, Asp33, Lys38, Tyr63, and 77–78 (GA). 2 residues coordinate substrate: Gln80 and Arg86. NAD(+) contacts are provided by residues Ser99, 116–118 (VTN), and Ser141. Substrate is bound at residue 118–121 (NPVD). 146–149 (DSSR) serves as a coordination point for substrate. Residues Arg151 and His166 each coordinate beta-D-fructose 1,6-bisphosphate. Residue His173 is the Proton acceptor of the active site. Tyr219 carries the phosphotyrosine modification. Substrate is bound at residue Thr228.

The protein belongs to the LDH/MDH superfamily. LDH family. In terms of assembly, homotetramer.

The protein localises to the cytoplasm. The enzyme catalyses (S)-lactate + NAD(+) = pyruvate + NADH + H(+). It participates in fermentation; pyruvate fermentation to lactate; (S)-lactate from pyruvate: step 1/1. Allosterically activated by fructose 1,6-bisphosphate (FBP). Catalyzes the conversion of lactate to pyruvate. The protein is L-lactate dehydrogenase of Thermoanaerobacterium saccharolyticum (strain DSM 8691 / JW/SL-YS485).